The chain runs to 124 residues: Conotoxin Cl14.12 (124 aa).

Positions 1 to 17 are cleaved as a signal peptide; that stretch reads MKVAVVLLVSLLAVTYA. The propeptide occupies 18–74; the sequence is LPEKRIFFGGIVDKVKDTFTKIFNKAKETFDKITDGFDVDFDEVVDKLIAQIHSTPT.

Contains 2 disulfide bond. In terms of tissue distribution, expressed by the venom duct.

The protein resides in the secreted. The protein is Conotoxin Cl14.12 of Californiconus californicus (California cone).